The following is a 314-amino-acid chain: Protein phosphatase PTC7 homolog fig (314 aa).

Residues Pro43 to Val309 enclose the PPM-type phosphatase domain. The Mn(2+) site is built by Asp87, Gly88, and Asp232.

Belongs to the PP2C family. Mg(2+) serves as cofactor. Mn(2+) is required as a cofactor.

It carries out the reaction O-phospho-L-seryl-[protein] + H2O = L-seryl-[protein] + phosphate. The catalysed reaction is O-phospho-L-threonyl-[protein] + H2O = L-threonyl-[protein] + phosphate. The chain is Protein phosphatase PTC7 homolog fig from Drosophila simulans (Fruit fly).